Consider the following 258-residue polypeptide: Methanol--corrinoid protein (258 aa).

In terms of domain architecture, B12-binding N-terminal spans 30 to 124; that stretch reads AEELYPKDEL…NSGATPKTKG (95 aa). The B12-binding domain maps to 123-248; the sequence is KGTVVCHVAE…DAIIAGTTDV (126 aa). Histidine 136 is a binding site for methylcob(III)alamin.

This sequence belongs to the methylamine corrinoid protein family. Heterotetramer, composed of 2 MtaB and 2 MtaC subunits.

Functionally, harbors a corrinoid prosthetic group and acts as a methyl group carrier in methanogenesis in the methanol pathway. The methyl group of methanol is first transferred to the corrinoid prosthetic group of MtaC in the cob(I)amide oxidation state. This reaction is mediated by MtaB. The methyl group from MtaC is then transferred to coenzyme M by MtaA. This Methanosarcina barkeri (strain Fusaro / DSM 804) protein is Methanol--corrinoid protein (mtaC).